The primary structure comprises 1076 residues: Atos homolog protein A (1076 aa).

A transactivation domain 1 (TAD1) region spans residues 24–32; sequence ALLITEGRT. Disordered stretches follow at residues 700–721 and 739–765; these read ESMS…TQLN and SDQL…QRRS. Positions 739 to 754 are enriched in basic and acidic residues; that stretch reads SDQLKNEQDKQEDPTN. The required for macropage invasion stretch occupies residues 878 to 935; it reads LLGNFEESVLNYRFDPLGIVDGFTAEVGASGAFCPTHLTLPVEVSFYSVSDDNAPSPY. The segment at 962–970 is transactivation domain 2 (TAD2); the sequence is FNPNKTVVK.

The protein belongs to the ATOS family.

It localises to the nucleus. Functionally, transcription regulator that syncronizes transcriptional and translational programs to promote macrophage invasion of tissues. The polypeptide is Atos homolog protein A (Homo sapiens (Human)).